Consider the following 79-residue polypeptide: MSLEALDQLQEKVQKMLEANALLQMEIEEFKEKNIVLEEKINAISAQQKDLVDQNNELKQEKTVWQNRLNSLLGKMDDI.

Positions M1 to D78 form a coiled coil.

The protein belongs to the ZapB family. As to quaternary structure, homodimer. The ends of the coiled-coil dimer bind to each other, forming polymers. Interacts with FtsZ.

The protein localises to the cytoplasm. Functionally, non-essential, abundant cell division factor that is required for proper Z-ring formation. It is recruited early to the divisome by direct interaction with FtsZ, stimulating Z-ring assembly and thereby promoting cell division earlier in the cell cycle. Its recruitment to the Z-ring requires functional FtsA or ZipA. This chain is Cell division protein ZapB, found in Hamiltonella defensa subsp. Acyrthosiphon pisum (strain 5AT).